Here is a 145-residue protein sequence, read N- to C-terminus: Protein SprT-like (145 aa).

The SprT-like domain maps to 4–140 (TNYVQEVSLA…VCGNCHGKLI (137 aa)). His-64 serves as a coordination point for Zn(2+). Glu-65 is a catalytic residue. His-68 contacts Zn(2+).

The protein belongs to the SprT family. The cofactor is Zn(2+).

The protein resides in the cytoplasm. The protein is Protein SprT-like of Streptococcus pyogenes serotype M18 (strain MGAS8232).